The sequence spans 342 residues: MFNIKPLSSEFEEAIQQKIDTKTKPLGALGDLEGLALQIAKVLGKDNPQINNPKMMVFAADHGIASSGVSIAPSEVTAQMVRNFMAGGAAINVFTRQVGLELEVIDCGVLQPFDSDSGVIDQRLGAGTGPIHKRAAMTLGAVKQGFEMAADRIQLHHQNGCNLIALGEMGIGNTSSAAAIMSVLTGVAASDCVGRGTGIDAATFKRKQMLIEQAVLLHHSELDDPMQVLACIGGFEIVQMTGAILAAAERGMLVVIDGFIASAAALVAVNINSHCRDYMIFSHQSDEKGHYLMLEYMQAKPLLNLGLKLGEGTGAALAFPLIQAAVNFYNQMASFEDAGIEI.

The active-site Proton acceptor is E311.

Belongs to the CobT family.

It carries out the reaction 5,6-dimethylbenzimidazole + nicotinate beta-D-ribonucleotide = alpha-ribazole 5'-phosphate + nicotinate + H(+). The protein operates within nucleoside biosynthesis; alpha-ribazole biosynthesis; alpha-ribazole from 5,6-dimethylbenzimidazole: step 1/2. Its function is as follows. Catalyzes the synthesis of alpha-ribazole-5'-phosphate from nicotinate mononucleotide (NAMN) and 5,6-dimethylbenzimidazole (DMB). The polypeptide is Nicotinate-nucleotide--dimethylbenzimidazole phosphoribosyltransferase (Shewanella piezotolerans (strain WP3 / JCM 13877)).